A 258-amino-acid chain; its full sequence is Capsid protein (258 aa).

The Bipartite nuclear localization signal motif lies at 3–20 (KRPGDIIISTPGSKVRRR). The Nuclear localization signal motif lies at 41-55 (RKRAWMNRPMYRKPM). Residues 69-86 (CEGPCKVQSFEQRDDVKH) fold into a zinc finger. The Nuclear export signal signature appears at 102 to 123 (LTHRVGKRFCIKSIYILGKIWM). The Bipartite nuclear localization signal signature appears at 202 to 249 (KRFYRLNHHVTYNHQEAGKYENHTENALLLYMACTHASNPVYATLKIR).

It belongs to the geminiviridae capsid protein family. Homomultimer. Binds to single-stranded and double-stranded viral DNA. Interacts (via nuclear localization signals) with host importin alpha-1a.

The protein resides in the virion. Its subcellular location is the host nucleus. Functionally, encapsidates the viral DNA into characteristic twinned ('geminate') particles. Binds the genomic viral ssDNA and shuttles it into and out of the cell nucleus. The CP of bipartite geminiviruses is not required for cell-to-cell or systemic movement. The sequence is that of Capsid protein from Hewittia sublobata (Coralbush).